The following is a 512-amino-acid chain: UDP-N-acetylmuramate--L-alanine ligase (512 aa).

132-138 is an ATP binding site; the sequence is GAHGKTT.

This sequence belongs to the MurCDEF family.

The protein localises to the cytoplasm. The enzyme catalyses UDP-N-acetyl-alpha-D-muramate + L-alanine + ATP = UDP-N-acetyl-alpha-D-muramoyl-L-alanine + ADP + phosphate + H(+). The protein operates within cell wall biogenesis; peptidoglycan biosynthesis. In terms of biological role, cell wall formation. The sequence is that of UDP-N-acetylmuramate--L-alanine ligase from Bifidobacterium longum (strain DJO10A).